Here is a 504-residue protein sequence, read N- to C-terminus: Maturase K (504 aa).

Belongs to the intron maturase 2 family. MatK subfamily.

The protein localises to the plastid. It localises to the chloroplast. In terms of biological role, usually encoded in the trnK tRNA gene intron. Probably assists in splicing its own and other chloroplast group II introns. The sequence is that of Maturase K from Vigna mungo (Black gram).